Reading from the N-terminus, the 105-residue chain is Large ribosomal subunit protein bL21 (105 aa).

It belongs to the bacterial ribosomal protein bL21 family. Part of the 50S ribosomal subunit. Contacts protein L20.

Its function is as follows. This protein binds to 23S rRNA in the presence of protein L20. The sequence is that of Large ribosomal subunit protein bL21 from Rickettsia canadensis (strain McKiel).